A 299-amino-acid polypeptide reads, in one-letter code: Aspartate carbamoyltransferase catalytic subunit (299 aa).

The carbamoyl phosphate site is built by Arg-51 and Thr-52. L-aspartate is bound at residue Lys-80. Carbamoyl phosphate-binding residues include Arg-101, His-129, and Gln-132. Residues Arg-162 and Arg-221 each contribute to the L-aspartate site. Carbamoyl phosphate contacts are provided by Leu-260 and Pro-261.

This sequence belongs to the aspartate/ornithine carbamoyltransferase superfamily. ATCase family. In terms of assembly, heterooligomer of catalytic and regulatory chains.

It carries out the reaction carbamoyl phosphate + L-aspartate = N-carbamoyl-L-aspartate + phosphate + H(+). Its pathway is pyrimidine metabolism; UMP biosynthesis via de novo pathway; (S)-dihydroorotate from bicarbonate: step 2/3. Catalyzes the condensation of carbamoyl phosphate and aspartate to form carbamoyl aspartate and inorganic phosphate, the committed step in the de novo pyrimidine nucleotide biosynthesis pathway. This Sulfolobus acidocaldarius (strain ATCC 33909 / DSM 639 / JCM 8929 / NBRC 15157 / NCIMB 11770) protein is Aspartate carbamoyltransferase catalytic subunit.